We begin with the raw amino-acid sequence, 1454 residues long: Receptor-type tyrosine-protein phosphatase T (1454 aa).

The N-terminal stretch at 1 to 29 is a signal peptide; it reads MGSLGGLALCLLRLLLLGLQRPPLPGAGA. Residues 30–770 are Extracellular-facing; it reads QSAAGGCSFD…EKQVDNTVKM (741 aa). Residues 34–195 form the MAM domain; sequence GGCSFDEHYS…VRVLAHPCRK (162 aa). 4 N-linked (GlcNAc...) asparagine glycosylation sites follow: asparagine 82, asparagine 102, asparagine 141, and asparagine 212. Residues 197 to 288 form the Ig-like C2-type domain; that stretch reads PHFLRLQNVE…SGVSNYAELI (92 aa). A disulfide bridge links cysteine 217 with cysteine 271. Fibronectin type-III domains are found at residues 295–388, 393–487, and 488–594; these read PIAP…TKCA, GPQN…TEED, and VPGA…SAPS. Asparagine 425, asparagine 514, asparagine 551, asparagine 605, asparagine 658, and asparagine 688 each carry an N-linked (GlcNAc...) asparagine glycan. In terms of domain architecture, Fibronectin type-III 4 spans 670–767; sequence AELKPSNLPV…VEPEKQVDNT (98 aa). The chain crosses the membrane as a helical span at residues 771-791; sequence AGVIAGLLMFIIILLGVMLTI. At 792–1454 the chain is on the cytoplasmic side; the sequence is KRRKLAKKQK…EVALEYLSSF (663 aa). Residues 800 to 852 are disordered; it reads QKETQSGAQREMGPVASTDKPTAKLGTNRNDEGFSSSSQDVNGFTDGSRGELS. Residues 824–841 are compositionally biased toward polar residues; it reads LGTNRNDEGFSSSSQDVN. 2 Tyrosine-protein phosphatase domains span residues 902-1156 and 1188-1450; these read FKEE…ILEA and IKDE…ALEY. Substrate contacts are provided by residues aspartate 1065, 1097–1103, and glutamine 1141; that span reads CSAGAGR. Catalysis depends on cysteine 1097, which acts as the Phosphocysteine intermediate. At serine 1221 the chain carries Phosphoserine. The active-site Phosphocysteine intermediate is cysteine 1391.

The protein belongs to the protein-tyrosine phosphatase family. Receptor class 2B subfamily. In terms of tissue distribution, expression is restricted to the CNS. Distributed throughout the brain and spinal cord.

The protein localises to the membrane. It carries out the reaction O-phospho-L-tyrosyl-[protein] + H2O = L-tyrosyl-[protein] + phosphate. In terms of biological role, may be involved in both signal transduction and cellular adhesion in the CNS. May have specific signaling roles in the tyrosine phosphorylation/dephosphorylation pathway in the anterior compartment of the adult cerebellar cortex. This chain is Receptor-type tyrosine-protein phosphatase T (Ptprt), found in Mus musculus (Mouse).